A 256-amino-acid polypeptide reads, in one-letter code: Protein FixA (256 aa).

Belongs to the ETF beta-subunit/FixA family. In terms of assembly, heterodimer of FixA and FixB.

It participates in amine and polyamine metabolism; carnitine metabolism. Required for anaerobic carnitine reduction. May bring reductant to CaiA. This Escherichia coli O17:K52:H18 (strain UMN026 / ExPEC) protein is Protein FixA.